Here is a 706-residue protein sequence, read N- to C-terminus: MAEFLFEIGLEEIPARMIAAAESELARRVAELLQREDLLAEGHAVTRYSTPRRLAVLVTGVKAAQADREEQLTGPAWSIAFKDGQPTPAAQAFAKKAGVEVAALQKVTTPKGEYVGASSVRKGRAANEILLEALPKEIAAIYWPKNMYWRAGKPERFVRPVQWMVALLGEQVIPVEFAGVTAANVTYGHRILHGDAPVAIPAPMEYAATLEAAKVQADVEARRHRIRKALDHVTRTVPGARWREDEALVDAVTHLTEWPSVLLGSFETEFLALPEEVLVTVMRDHQKYFAVEDAAGKLAPHFLTALNTEPSDQAAAIIRHGNERVLRARFNDARFFWTVDQKISLANRLEMLQSVTFHKELGSYHQKTHTTREIAVKLSAQVRHAGTSVDEAALLRAVELAKTDLTTELVKEFTELQGIVGGLYARAQGEGEAVAQAIYWQYSPASMDDPIPPTLEGQLLGLADRIGTIVEMFAIGLEPTGSKDPFALRRAANAVVKILAEGKLPVTLDRLLNAAEESSKVENAAASREKVMAFLKERLEFYMREVLGYRYDVVNAVLAAGAHDVVDTIARAEALSAVRGSEDFAAIAAAFKRSKNILRQAAEKAGVAEDSLSADVDAALLPEPAEKQLHEAAAKLAPVVEELRAKNDYRAALEQIATLRPQVDLFFDKVMVMVEDDLLRHNRLALIQYVLRSFSSIADFSEIVAS.

It belongs to the class-II aminoacyl-tRNA synthetase family. In terms of assembly, tetramer of two alpha and two beta subunits.

It localises to the cytoplasm. The catalysed reaction is tRNA(Gly) + glycine + ATP = glycyl-tRNA(Gly) + AMP + diphosphate. The chain is Glycine--tRNA ligase beta subunit from Acidobacterium capsulatum (strain ATCC 51196 / DSM 11244 / BCRC 80197 / JCM 7670 / NBRC 15755 / NCIMB 13165 / 161).